The primary structure comprises 472 residues: Glutamine synthetase (472 aa).

Residues 13–101 (SKARFVDLRF…TCDVIDPADG (89 aa)) form the GS beta-grasp domain. In terms of domain architecture, GS catalytic spans 108-472 (PRSIARRAEA…PLEFEMYYSL (365 aa)). Residues Glu133 and Glu135 each contribute to the Mg(2+) site. Glu211 contributes to the ATP binding site. Positions 216 and 224 each coordinate Mg(2+). L-glutamate contacts are provided by residues 268–269 (NG) and Gly269. His273 contributes to the Mg(2+) binding site. ATP-binding positions include 275-277 (HQS) and Ser277. L-glutamate-binding residues include Arg325, Glu331, and Arg343. 3 residues coordinate ATP: Arg343, Arg348, and Lys356. Glu361 serves as a coordination point for Mg(2+). Arg363 contributes to the L-glutamate binding site. The residue at position 401 (Tyr401) is an O-AMP-tyrosine.

This sequence belongs to the glutamine synthetase family. In terms of assembly, oligomer of 12 subunits arranged in the form of two hexameric ring. It depends on Mg(2+) as a cofactor.

Its subcellular location is the cytoplasm. It carries out the reaction L-glutamate + NH4(+) + ATP = L-glutamine + ADP + phosphate + H(+). With respect to regulation, the activity of this enzyme could be controlled by adenylation under conditions of abundant glutamine. Catalyzes the ATP-dependent biosynthesis of glutamine from glutamate and ammonia. This chain is Glutamine synthetase, found in Neisseria gonorrhoeae.